Consider the following 594-residue polypeptide: Probable glucose transporter rco-3 (594 aa).

The Cytoplasmic segment spans residues 1 to 13 (MAIFAMGWQKPDN). Residues 14-34 (VAGSSAPAIMVGLFVATGGLL) traverse the membrane as a helical segment. At 35–73 (LGYDTGTINGILAMKSFKDHFSTGYIDGNGQPGIYPKES) the chain is on the extracellular side. A helical transmembrane segment spans residues 74 to 94 (ALIVAMLSAGTAIGALLAAPL). Residues 95–103 (GDHYGRRRS) are Cytoplasmic-facing. A helical membrane pass occupies residues 104–124 (LIGAIGIFVIGAILQVCAYNI). Asp125 is a topological domain (extracellular). A helical transmembrane segment spans residues 126 to 146 (LLVAGRTVAGVGIGIVSVLVP). Topologically, residues 147–159 (LYQSEMAPKWIRG) are cytoplasmic. The helical transmembrane segment at 160 to 180 (TLVCTYQLSITMGLLAAAVVN) threads the bilayer. Residues 181–193 (ILTYKLKTAAAYR) lie on the Extracellular side of the membrane. The chain crosses the membrane as a helical span at residues 194-214 (VPIGLQLTWACVLALGLTVLP). The Cytoplasmic segment spans residues 215–293 (ETPRYLIKRG…TGCCLQMLQQ (79 aa)). The helical transmembrane segment at 294–314 (LTGVNFIMYYGTTFFNNAGVG) threads the bilayer. Residues 315-318 (NPFK) lie on the Extracellular side of the membrane. Residues 319–339 (ISLIMQVINTASTIPGLFVVE) traverse the membrane as a helical segment. The Cytoplasmic portion of the chain corresponds to 340-345 (SWGRRR). Residues 346–366 (LLMVGAIGMAICQLLIAAFAT) form a helical membrane-spanning segment. The Extracellular portion of the chain corresponds to 367–378 (ASGSNNLSAQNK). The N-linked (GlcNAc...) asparagine glycan is linked to Asn372. A helical transmembrane segment spans residues 379–403 (VLITFVAIYIFFFAASWGPVVWVVT). Residues 404–415 (SEIYPLKVRAKS) are Cytoplasmic-facing. A helical transmembrane segment spans residues 416-436 (MSITTASNWFLNFGIAYGTPY). Topologically, residues 437-454 (MQTNSAASDESSIDLGSK) are extracellular. Residues 455-475 (VFFVWGAFCIVAVGFVWCMVY) form a helical membrane-spanning segment. Topologically, residues 476 to 594 (ETSKISLEQI…ASLGNIDLSY (119 aa)) are cytoplasmic. Residues 512–594 (DLGFSDGGIP…ASLGNIDLSY (83 aa)) are disordered. A compositionally biased stretch (low complexity) spans 524-576 (QQLQQQPQQPQQQQQQHHQQQQHQLQVDLQQSQSRTSNSSTSQTDTGGSNNTG).

This sequence belongs to the major facilitator superfamily. Sugar transporter (TC 2.A.1.1) family.

It localises to the membrane. Functionally, probable glucose transporter. Involved in sugar transport, carbon catabolite repression, and initiation of conidiophore development. This Neurospora crassa (strain ATCC 24698 / 74-OR23-1A / CBS 708.71 / DSM 1257 / FGSC 987) protein is Probable glucose transporter rco-3 (rco-3).